We begin with the raw amino-acid sequence, 579 residues long: Glucans biosynthesis protein G (579 aa).

A signal peptide spans 1 to 37 (MIVSPHKASRIPGNRLRKALMASAALVGLMSAGQLWA). The interval 516 to 579 (AKPAEEAKHD…TWSYQLPADE (64 aa)) is disordered. A compositionally biased stretch (basic and acidic residues) spans 517 to 539 (KPAEEAKHDKTAAKHGKAEKAAK).

This sequence belongs to the OpgD/OpgG family.

It localises to the periplasm. It participates in glycan metabolism; osmoregulated periplasmic glucan (OPG) biosynthesis. Its function is as follows. Involved in the biosynthesis of osmoregulated periplasmic glucans (OPGs). The polypeptide is Glucans biosynthesis protein G (Pseudomonas putida (strain W619)).